The primary structure comprises 454 residues: L-serine dehydratase 1 (454 aa).

This sequence belongs to the iron-sulfur dependent L-serine dehydratase family. [4Fe-4S] cluster serves as cofactor. Post-translationally, activated by post-translational modification by a system involving at least three gene products. Activation is mimicked in vitro by iron and dithiothreitol. There is considerable evidence for a free-radical activation mechanism.

The enzyme catalyses L-serine = pyruvate + NH4(+). The protein operates within carbohydrate biosynthesis; gluconeogenesis. Functionally, also deaminates threonine, particularly when it is present in high concentration. This Escherichia coli (strain K12) protein is L-serine dehydratase 1 (sdaA).